The primary structure comprises 485 residues: Inosine-5'-monophosphate dehydrogenase (485 aa).

CBS domains lie at 97-154 and 155-211; these read IIRD…VSDV and MVRD…PDAS. NAD(+) is bound by residues Asp246 and 295-297; that span reads GIG. Gly297 and Gly299 together coordinate K(+). Ser300 serves as a coordination point for IMP. Cys302 provides a ligand contact to K(+). The Thioimidate intermediate role is filled by Cys302. Residues 335 to 337, 358 to 359, and 382 to 386 contribute to the IMP site; these read DGG, GS, and YRGMG. Arg398 serves as the catalytic Proton acceptor. An IMP-binding site is contributed by Glu409. Glu463, Ser464, and His465 together coordinate K(+).

It belongs to the IMPDH/GMPR family. As to quaternary structure, homotetramer. K(+) is required as a cofactor.

It carries out the reaction IMP + NAD(+) + H2O = XMP + NADH + H(+). It participates in purine metabolism; XMP biosynthesis via de novo pathway; XMP from IMP: step 1/1. Its activity is regulated as follows. Mycophenolic acid (MPA) is a non-competitive inhibitor that prevents formation of the closed enzyme conformation by binding to the same site as the amobile flap. In contrast, mizoribine monophosphate (MZP) is a competitive inhibitor that induces the closed conformation. MPA is a potent inhibitor of mammalian IMPDHs but a poor inhibitor of the bacterial enzymes. MZP is a more potent inhibitor of bacterial IMPDH. Its function is as follows. Catalyzes the conversion of inosine 5'-phosphate (IMP) to xanthosine 5'-phosphate (XMP), the first committed and rate-limiting step in the de novo synthesis of guanine nucleotides, and therefore plays an important role in the regulation of cell growth. This is Inosine-5'-monophosphate dehydrogenase from Thermoplasma acidophilum (strain ATCC 25905 / DSM 1728 / JCM 9062 / NBRC 15155 / AMRC-C165).